Reading from the N-terminus, the 216-residue chain is Vascular endothelial growth factor A (216 aa).

An N-terminal signal peptide occupies residues 1–26 (MNFLLTWIHWGLAALLYLQSAELSKA). Cystine bridges form between Cys52–Cys94, Cys83–Cys128, and Cys87–Cys130. Residue Asn101 is glycosylated (N-linked (GlcNAc...) asparagine). The segment covering 132 to 141 (PKKDVKNKQE) has biased composition (basic and acidic residues). A disordered region spans residues 132 to 167 (PKKDVKNKQEKKSKRGKGKGQKRKRKKGRYKPPSFH). Basic residues predominate over residues 142–161 (KKSKRGKGKGQKRKRKKGRY).

The protein belongs to the PDGF/VEGF growth factor family. Homodimer; disulfide-linked. Also found as heterodimer with PGF.

Functionally, growth factor active in angiogenesis, vasculogenesis and endothelial cell growth. Induces endothelial cell proliferation, promotes cell migration, inhibits apoptosis and induces permeabilization of blood vessels. Binds to the FLT1/VEGFR1 and KDR/VEGFR2 receptors, heparan sulfate and heparin. This chain is Vascular endothelial growth factor A (VEGFA), found in Gallus gallus (Chicken).